The primary structure comprises 272 residues: Nuclear transcription factor Y subunit A-1 (272 aa).

Disordered regions lie at residues 1–20 and 34–106; these read MQSK…HAVQ and SFGV…PALS. Polar residues-rich tracts occupy residues 46–61 and 82–92; these read IPSN…GSES and KDSQAATSSRS. The short motif at 175–198 is the Subunit association domain (SAD) element; that stretch reads YVNAKQYEGILRRRKARAKAELER. A DNA-binding region (NFYA/HAP2-type) is located at residues 205 to 230; it reads KPYLHESRHKHAMRRARASGGRFAKK. Residues 206–272 form a disordered region; the sequence is PYLHESRHKH…NETLNSSGAP (67 aa). The segment covering 211–221 has biased composition (basic residues); it reads SRHKHAMRRAR. A compositionally biased stretch (basic and acidic residues) spans 229 to 247; sequence KKSEVEAGEDAGGRDRERG. 2 stretches are compositionally biased toward polar residues: residues 248 to 257 and 263 to 272; these read SATNSSGSEQ and NETLNSSGAP.

This sequence belongs to the NFYA/HAP2 subunit family. As to quaternary structure, heterotrimeric transcription factor composed of three components, NF-YA, NF-YB and NF-YC. NF-YB and NF-YC must interact and dimerize for NF-YA association and DNA binding. As to expression, ubiquitous.

It is found in the nucleus. Functionally, stimulates the transcription of various genes by recognizing and binding to a CCAAT motif in promoters. In Arabidopsis thaliana (Mouse-ear cress), this protein is Nuclear transcription factor Y subunit A-1 (NFYA1).